A 552-amino-acid chain; its full sequence is uncharacterized protein (552 aa).

The region spanning 8-200 is the DhaL domain; that stretch reads KLFADMIIQG…LLCVYEGFLK (193 aa).

This is an uncharacterized protein from Staphylococcus epidermidis (strain ATCC 35984 / DSM 28319 / BCRC 17069 / CCUG 31568 / BM 3577 / RP62A).